The sequence spans 400 residues: Queuine tRNA-ribosyltransferase catalytic subunit 1 (400 aa).

Catalysis depends on D103, which acts as the Proton acceptor. Queuine is bound by residues 103–107 (DSGGF), D157, Q200, and G227. The tract at residues 258–264 (GVGYAVD) is RNA binding. The active-site Nucleophile is the D277. The RNA binding; important for wobble base 34 recognition stretch occupies residues 282-286 (TRTAR). Positions 315, 317, 320, and 345 each coordinate Zn(2+).

This sequence belongs to the queuine tRNA-ribosyltransferase family. In terms of assembly, heterodimer of a catalytic subunit qtrt1 and an accessory subunit qtrt2. The cofactor is Zn(2+).

It localises to the cytoplasm. It is found in the mitochondrion outer membrane. It catalyses the reaction guanosine(34) in tRNA + queuine = queuosine(34) in tRNA + guanine. Catalytic subunit of the queuine tRNA-ribosyltransferase (TGT) that catalyzes the base-exchange of a guanine (G) residue with queuine (Q) at position 34 (anticodon wobble position) in tRNAs with GU(N) anticodons (tRNA-Asp, -Asn, -His and -Tyr), resulting in the hypermodified nucleoside queuosine (7-(((4,5-cis-dihydroxy-2-cyclopenten-1-yl)amino)methyl)-7-deazaguanosine). Catalysis occurs through a double-displacement mechanism. The nucleophile active site attacks the C1' of nucleotide 34 to detach the guanine base from the RNA, forming a covalent enzyme-RNA intermediate. The proton acceptor active site deprotonates the incoming queuine, allowing a nucleophilic attack on the C1' of the ribose to form the product. The protein is Queuine tRNA-ribosyltransferase catalytic subunit 1 of Danio rerio (Zebrafish).